A 1946-amino-acid chain; its full sequence is Sickle tail protein (1946 aa).

Disordered stretches follow at residues 1–83 and 113–176; these read MEES…GMQP and ERLR…VRSA. Residues 18-36 are compositionally biased toward polar residues; sequence DSRQMPQQGRSNLHVTSQE. Residues 38–47 show a composition bias toward basic and acidic residues; it reads AACRRPRERL. Ser-169 is modified (phosphoserine). A Phosphotyrosine modification is found at Tyr-244. 2 disordered regions span residues 305–324 and 339–374; these read HPPH…HSLP and AIPG…RDVK. Pro residues predominate over residues 308-324; sequence HVIPNSPPSTPVPHSLP. The span at 352–367 shows a compositional bias: low complexity; the sequence is SSLPVSRSISPSPSAI. The O-linked (GlcNAc) serine glycan is linked to Ser-357. Ser-361 and Ser-365 each carry phosphoserine. Tyr-393 is subject to Phosphotyrosine. The segment at 455–512 is disordered; sequence SRKYPDSHLPTLGSKTPPASPHRVGDLRMIDLHPHLNTHGPPHTLQPDRASPSRQSFK. Thr-470 carries the phosphothreonine modification. Residue Ser-474 is modified to Phosphoserine. Over residues 477–488 the composition is skewed to basic and acidic residues; the sequence is RVGDLRMIDLHP. Coiled-coil stretches lie at residues 557–581 and 644–685; these read RETR…QSAL and TSLL…ELEI. Ser-809 is modified (phosphoserine). 2 disordered regions span residues 853-875 and 891-947; these read EETA…DVKS and SPVV…PVNG. Polar residues-rich tracts occupy residues 891 to 909 and 927 to 947; these read SPVV…NPAQ and QEVT…PVNG. A coiled-coil region spans residues 962–990; sequence SAKNRAVSIEKAEKKWEEKRQNLEHYNGK. Residues 1008 to 1221 are disordered; the sequence is PNLEMPPASS…LRPSGPPKWE (214 aa). 4 positions are modified to phosphoserine: Ser-1032, Ser-1035, Ser-1038, and Ser-1049. Residues 1049 to 1058 are compositionally biased toward pro residues; it reads SPPPPPPPPR. Positions 1151–1162 are enriched in polar residues; the sequence is NPNSHAEQSRAN. Over residues 1176–1194 the composition is skewed to basic and acidic residues; the sequence is PKEKKNLEFYHEDVRKSDV. Ser-1466 is subject to Phosphoserine. Positions 1469-1495 form a coiled coil; the sequence is FEECDEELERMLTEEKIEEEEEDENED. Disordered stretches follow at residues 1482-1567, 1622-1664, and 1691-1946; these read EEKI…VDDQ, AKRF…RKST, and VDTS…KETS. Residues 1484-1495 show a composition bias toward acidic residues; the sequence is KIEEEEEDENED. Residues 1498–1508 are compositionally biased toward polar residues; the sequence is VRTSSQMSCEQ. 2 stretches are compositionally biased toward basic and acidic residues: residues 1509–1518 and 1622–1644; these read VDSRSDRMGQ and AKRF…RRQE. The stretch at 1659 to 1688 forms a coiled coil; that stretch reads EIRKSTYRTLDSLEQTIKQLENTISEMSPR. Positions 1739–1759 are enriched in polar residues; that stretch reads KGSSTTPQTSRMPVPMTSKNR. Phosphoserine is present on Ser-1741. Over residues 1765–1777 the composition is skewed to basic and acidic residues; it reads KASKQSKLQDPRQ. Over residues 1806-1825 the composition is skewed to low complexity; sequence ALSPSSGKSSSLPSASGDSS. At Ser-1843 the chain carries Phosphoserine. A compositionally biased stretch (polar residues) spans 1851–1866; it reads HSASLIPSVSNGSLKF. A compositionally biased stretch (low complexity) spans 1890–1899; it reads AAPTTSSSSS. Residues Ser-1899, Ser-1902, and Ser-1905 each carry the phosphoserine modification. Residues 1920 to 1946 are compositionally biased toward polar residues; the sequence is HTPSLASYKAQNGSSSKATPSTAKETS.

As to quaternary structure, interacts with CPNE4 (via VWFA domain). In terms of tissue distribution, expressed predominantly in the notochord and mesonephros during embryogenesis as well as in other areas such as the epithalamus sulcus, lens vesicle, inner retinal layer, heart, hepatic primordial surface, infundibulum, surface ectoderm, hind gut and limb bud mesenchyme. In adults, expressed in a range of tissues including the nucleus pulposus, corpus callosum, kidney, cardiac muscle, Sertoli cells and hair follicles.

The protein localises to the cytoplasm. Its subcellular location is the cytoskeleton. It is found in the microtubule organizing center. The protein resides in the centrosome. Required for normal development of intervertebral disks. The polypeptide is Sickle tail protein (Mus musculus (Mouse)).